Reading from the N-terminus, the 359-residue chain is E2F transcription factor-like E2FD (359 aa).

2 consecutive DNA-binding regions follow at residues 13–78 and 138–217; these read RKDK…SWKG and RKER…RWLG. Disordered regions lie at residues 255–274 and 288–313; these read RNKS…QNTS and DVKN…NNIR. Polar residues predominate over residues 293 to 309; it reads ASGSSTPAGTSESNDMG.

It belongs to the E2F/DP family. In terms of assembly, monomer. No interactions with DPA or E2FA. In terms of tissue distribution, preferentially expressed in proliferating tissues. Highly expressed in young stalk and young flowers. Lower expression in young leaves and mature flowers. Detected in cotyledonary vascular tissues, the shoot apical meristem, the base of trichomes, the fully developed stomata, the central root cylinder and in the columella of lateral roots but not in the primary root tips or in the leaf epidermal cells.

Its subcellular location is the nucleus. In terms of biological role, inhibitor of E2F-dependent regulation of gene expression. Binds specifically the E2 recognition site as a monomer without interacting with DP proteins. May be up-regulating E2FA and down-regulating repressors of cell cycle progression. Promotes cell proliferation and represses cell elongation. Regulated by proteolysis via a ubiquitin-proteasome pathway. The polypeptide is E2F transcription factor-like E2FD (E2FD) (Arabidopsis thaliana (Mouse-ear cress)).